A 432-amino-acid polypeptide reads, in one-letter code: Asparagine--tRNA ligase (432 aa).

The protein belongs to the class-II aminoacyl-tRNA synthetase family. Homodimer.

Its subcellular location is the cytoplasm. The enzyme catalyses tRNA(Asn) + L-asparagine + ATP = L-asparaginyl-tRNA(Asn) + AMP + diphosphate + H(+). The sequence is that of Asparagine--tRNA ligase from Lacticaseibacillus paracasei (strain ATCC 334 / BCRC 17002 / CCUG 31169 / CIP 107868 / KCTC 3260 / NRRL B-441) (Lactobacillus paracasei).